A 314-amino-acid polypeptide reads, in one-letter code: PDZ domain-containing protein GIPC2 (314 aa).

The segment covering 1-12 has biased composition (basic residues); that stretch reads MPLGLRGKKKAA. Residues 1-36 form a disordered region; it reads MPLGLRGKKKAAKSKEAARLVEGERSSGSQGVPGPP. The segment covering 13–25 has biased composition (basic and acidic residues); it reads KSKEAARLVEGER. The PDZ domain maps to 117–197; sequence EVNVYKSEDS…EELFTLQLIE (81 aa).

The protein belongs to the GIPC family. Probably interacts with SEMA5A. As to expression, expressed in kidney and lung (at protein level).

The protein resides in the cytoplasm. The polypeptide is PDZ domain-containing protein GIPC2 (Gipc2) (Mus musculus (Mouse)).